The following is a 422-amino-acid chain: Glucose-1-phosphate adenylyltransferase (422 aa).

Alpha-D-glucose 1-phosphate-binding positions include tyrosine 110, glycine 175, 190 to 191, and serine 208; that span reads EK.

The protein belongs to the bacterial/plant glucose-1-phosphate adenylyltransferase family. In terms of assembly, homotetramer.

The enzyme catalyses alpha-D-glucose 1-phosphate + ATP + H(+) = ADP-alpha-D-glucose + diphosphate. The protein operates within glycan biosynthesis; glycogen biosynthesis. Its function is as follows. Involved in the biosynthesis of ADP-glucose, a building block required for the elongation reactions to produce glycogen. Catalyzes the reaction between ATP and alpha-D-glucose 1-phosphate (G1P) to produce pyrophosphate and ADP-Glc. The polypeptide is Glucose-1-phosphate adenylyltransferase (Hydrogenovibrio crunogenus (strain DSM 25203 / XCL-2) (Thiomicrospira crunogena)).